The sequence spans 273 residues: 4-hydroxy-tetrahydrodipicolinate reductase (273 aa).

NAD(+)-binding positions include 12–17 (GAGGRM) and Glu-38. An NADP(+)-binding site is contributed by Arg-39. NAD(+)-binding positions include 102-104 (GTT) and 126-129 (AANF). The Proton donor/acceptor role is filled by His-159. Residue His-160 participates in (S)-2,3,4,5-tetrahydrodipicolinate binding. The Proton donor role is filled by Lys-163. Position 169 to 170 (169 to 170 (GT)) interacts with (S)-2,3,4,5-tetrahydrodipicolinate.

This sequence belongs to the DapB family. Homotetramer.

It localises to the cytoplasm. It catalyses the reaction (S)-2,3,4,5-tetrahydrodipicolinate + NAD(+) + H2O = (2S,4S)-4-hydroxy-2,3,4,5-tetrahydrodipicolinate + NADH + H(+). It carries out the reaction (S)-2,3,4,5-tetrahydrodipicolinate + NADP(+) + H2O = (2S,4S)-4-hydroxy-2,3,4,5-tetrahydrodipicolinate + NADPH + H(+). It functions in the pathway amino-acid biosynthesis; L-lysine biosynthesis via DAP pathway; (S)-tetrahydrodipicolinate from L-aspartate: step 4/4. Catalyzes the conversion of 4-hydroxy-tetrahydrodipicolinate (HTPA) to tetrahydrodipicolinate. This chain is 4-hydroxy-tetrahydrodipicolinate reductase, found in Salmonella choleraesuis (strain SC-B67).